We begin with the raw amino-acid sequence, 378 residues long: Dual-specificity RNA methyltransferase RlmN (378 aa).

The active-site Proton acceptor is Glu95. In terms of domain architecture, Radical SAM core spans 101–345; that stretch reads EETRGTLCVS…TTIRKTRGDD (245 aa). An intrachain disulfide couples Cys108 to Cys350. [4Fe-4S] cluster is bound by residues Cys115, Cys119, and Cys122. Residues 176 to 177, Ser208, 230 to 232, and Asn307 each bind S-adenosyl-L-methionine; these read GE and SLH. Catalysis depends on Cys350, which acts as the S-methylcysteine intermediate.

The protein belongs to the radical SAM superfamily. RlmN family. It depends on [4Fe-4S] cluster as a cofactor.

The protein localises to the cytoplasm. It catalyses the reaction adenosine(2503) in 23S rRNA + 2 reduced [2Fe-2S]-[ferredoxin] + 2 S-adenosyl-L-methionine = 2-methyladenosine(2503) in 23S rRNA + 5'-deoxyadenosine + L-methionine + 2 oxidized [2Fe-2S]-[ferredoxin] + S-adenosyl-L-homocysteine. It carries out the reaction adenosine(37) in tRNA + 2 reduced [2Fe-2S]-[ferredoxin] + 2 S-adenosyl-L-methionine = 2-methyladenosine(37) in tRNA + 5'-deoxyadenosine + L-methionine + 2 oxidized [2Fe-2S]-[ferredoxin] + S-adenosyl-L-homocysteine. In terms of biological role, specifically methylates position 2 of adenine 2503 in 23S rRNA and position 2 of adenine 37 in tRNAs. m2A2503 modification seems to play a crucial role in the proofreading step occurring at the peptidyl transferase center and thus would serve to optimize ribosomal fidelity. In Burkholderia pseudomallei (strain K96243), this protein is Dual-specificity RNA methyltransferase RlmN.